Consider the following 512-residue polypeptide: Cytochrome P450 82C3 (512 aa).

The chain crosses the membrane as a helical span at residues 1-21; the sequence is MDTSLFSLFVSILVFVFIALF. Cys451 contributes to the heme binding site.

It belongs to the cytochrome P450 family. The cofactor is heme.

It localises to the membrane. In Arabidopsis thaliana (Mouse-ear cress), this protein is Cytochrome P450 82C3 (CYP82C3).